The sequence spans 328 residues: Tryptophan--tRNA ligase (328 aa).

Residues 10-12 (QAT) and 18-19 (GN) contribute to the ATP site. The short motif at 11–19 (ATGSLHLGN) is the 'HIGH' region element. Residue Asp134 coordinates L-tryptophan. ATP is bound by residues 146–148 (GED), Ile186, and 195–199 (KMSKS). Residues 195–199 (KMSKS) carry the 'KMSKS' region motif.

It belongs to the class-I aminoacyl-tRNA synthetase family. In terms of assembly, homodimer.

The protein resides in the cytoplasm. It catalyses the reaction tRNA(Trp) + L-tryptophan + ATP = L-tryptophyl-tRNA(Trp) + AMP + diphosphate + H(+). Catalyzes the attachment of tryptophan to tRNA(Trp). The polypeptide is Tryptophan--tRNA ligase (Rickettsia bellii (strain RML369-C)).